A 314-amino-acid chain; its full sequence is MNILLANPRGFCAGVDRAISIVELALEIHGAPIYVRHEVVHNRFVVDGLKAKGAVFVEELDEVPDGAIVIFSAHGVSQEVRQEAKRRGLKVFDATCPLVTKVHMQVARASKKGTKAILIGHEGHPEVIGTMGQYDNQDAGIFLVESVEDIAKLPVSSQDDLTFMTQTTLSIDDTSDVIEALKEKYPAIQGPRKNDICYATTNRQQAVRELAKQSQLVLVVGSKNSSNSNRLAELASRMGVPSKLIDGPQDIDPSWLDGVETIGITAGASAPEVLVQSVVEHLKTLGVTGVSNLEGCEENMVFEVPKELRIHEVK.

Cys-12 provides a ligand contact to [4Fe-4S] cluster. 2 residues coordinate (2E)-4-hydroxy-3-methylbut-2-enyl diphosphate: His-41 and His-74. Positions 41 and 74 each coordinate dimethylallyl diphosphate. Isopentenyl diphosphate contacts are provided by His-41 and His-74. Residue Cys-96 participates in [4Fe-4S] cluster binding. Residue His-124 participates in (2E)-4-hydroxy-3-methylbut-2-enyl diphosphate binding. His-124 contacts dimethylallyl diphosphate. His-124 is an isopentenyl diphosphate binding site. Residue Glu-126 is the Proton donor of the active site. Residue Thr-167 coordinates (2E)-4-hydroxy-3-methylbut-2-enyl diphosphate. Cys-197 provides a ligand contact to [4Fe-4S] cluster. (2E)-4-hydroxy-3-methylbut-2-enyl diphosphate contacts are provided by Ser-225, Ser-226, Asn-227, and Ser-269. Ser-225, Ser-226, Asn-227, and Ser-269 together coordinate dimethylallyl diphosphate. Positions 225, 226, 227, and 269 each coordinate isopentenyl diphosphate.

This sequence belongs to the IspH family. [4Fe-4S] cluster serves as cofactor.

It catalyses the reaction isopentenyl diphosphate + 2 oxidized [2Fe-2S]-[ferredoxin] + H2O = (2E)-4-hydroxy-3-methylbut-2-enyl diphosphate + 2 reduced [2Fe-2S]-[ferredoxin] + 2 H(+). It carries out the reaction dimethylallyl diphosphate + 2 oxidized [2Fe-2S]-[ferredoxin] + H2O = (2E)-4-hydroxy-3-methylbut-2-enyl diphosphate + 2 reduced [2Fe-2S]-[ferredoxin] + 2 H(+). It participates in isoprenoid biosynthesis; dimethylallyl diphosphate biosynthesis; dimethylallyl diphosphate from (2E)-4-hydroxy-3-methylbutenyl diphosphate: step 1/1. It functions in the pathway isoprenoid biosynthesis; isopentenyl diphosphate biosynthesis via DXP pathway; isopentenyl diphosphate from 1-deoxy-D-xylulose 5-phosphate: step 6/6. Functionally, catalyzes the conversion of 1-hydroxy-2-methyl-2-(E)-butenyl 4-diphosphate (HMBPP) into a mixture of isopentenyl diphosphate (IPP) and dimethylallyl diphosphate (DMAPP). Acts in the terminal step of the DOXP/MEP pathway for isoprenoid precursor biosynthesis. This is 4-hydroxy-3-methylbut-2-enyl diphosphate reductase from Actinobacillus pleuropneumoniae serotype 5b (strain L20).